The primary structure comprises 111 residues: Large ribosomal subunit protein uL24 (111 aa).

Belongs to the universal ribosomal protein uL24 family. In terms of assembly, part of the 50S ribosomal subunit.

Its function is as follows. One of two assembly initiator proteins, it binds directly to the 5'-end of the 23S rRNA, where it nucleates assembly of the 50S subunit. In terms of biological role, one of the proteins that surrounds the polypeptide exit tunnel on the outside of the subunit. The sequence is that of Large ribosomal subunit protein uL24 from Bifidobacterium animalis subsp. lactis (strain AD011).